The following is a 91-amino-acid chain: Small ribosomal subunit protein uS19 (91 aa).

This sequence belongs to the universal ribosomal protein uS19 family.

In terms of biological role, protein S19 forms a complex with S13 that binds strongly to the 16S ribosomal RNA. The sequence is that of Small ribosomal subunit protein uS19 from Prochlorococcus marinus (strain MIT 9211).